Reading from the N-terminus, the 143-residue chain is Small ribosomal subunit protein eS19B (143 aa).

It belongs to the eukaryotic ribosomal protein eS19 family. In terms of assembly, component of the small ribosomal subunit (SSU). Mature yeast ribosomes consist of a small (40S) and a large (60S) subunit. The 40S small subunit contains 1 molecule of ribosomal RNA (18S rRNA) and at least 33 different proteins. The large 60S subunit contains 3 rRNA molecules (25S, 5.8S and 5S rRNA) and at least 46 different proteins.

It localises to the cytoplasm. Its subcellular location is the nucleus. Component of the ribosome, a large ribonucleoprotein complex responsible for the synthesis of proteins in the cell. The small ribosomal subunit (SSU) binds messenger RNAs (mRNAs) and translates the encoded message by selecting cognate aminoacyl-transfer RNA (tRNA) molecules. The large subunit (LSU) contains the ribosomal catalytic site termed the peptidyl transferase center (PTC), which catalyzes the formation of peptide bonds, thereby polymerizing the amino acids delivered by tRNAs into a polypeptide chain. The nascent polypeptides leave the ribosome through a tunnel in the LSU and interact with protein factors that function in enzymatic processing, targeting, and the membrane insertion of nascent chains at the exit of the ribosomal tunnel. eS19 is required for proper maturation of the small (40S) ribosomal subunit. Binds to 40S pre-ribosomal particles, probably required after association of NOC4 but before association of ENP1, TSR1 and RIO2 with 20/21S pre-rRNA. In Schizosaccharomyces pombe (strain 972 / ATCC 24843) (Fission yeast), this protein is Small ribosomal subunit protein eS19B (rps1902).